Consider the following 679-residue polypeptide: Patatin-like phospholipase 1 (679 aa).

Disordered regions lie at residues 19–45 and 155–194; these read FSDDEKDDSYEREKQVYSGSETQNAEN and GEYEKRNTSSYDNTESVQNTVGSEKEETENKNEETSNYNS. Polar residues-rich tracts occupy residues 35–45 and 162–176; these read YSGSETQNAEN and TSSYDNTESVQNTVG. The span at 177 to 188 shows a compositional bias: basic and acidic residues; that stretch reads SEKEETENKNEE. The PNPLA domain occupies 338–544; the sequence is LSLDGGGILT…KASNPALIAL (207 aa). A GXSXG motif is present at residues 381-385; it reads GTSAG. Residue serine 383 is the Nucleophile of the active site. Catalysis depends on aspartate 531, which acts as the Proton acceptor. A DGA/G motif is present at residues 531-533; it reads DGA.

Belongs to the patatin family.

It is found in the cytoplasm. The enzyme catalyses a 1,2-diacyl-sn-glycero-3-phosphocholine + H2O = a 1-acyl-sn-glycero-3-phosphocholine + a fatty acid + H(+). It catalyses the reaction 1,2-dihexadecanoyl-sn-glycero-3-phosphocholine + H2O = 1-hexadecanoyl-sn-glycero-3-phosphocholine + hexadecanoate + H(+). Functionally, hydrolyzes the ester bond of the fatty acyl group attached at the sn-2 position of phospholipids such as phosphatidylcholine. Involved in gametogenesis; however, it is not clear whether it is involved in gametocytes development in host erythrocytes or in gametocyte activation in the mosquito midgut. Involved in gametocyte development in host erythrocytes; however, not involved in gametocytes activation including male gamete exflagellation. Involved in the rounding up of gametocytes following activation in the mosquito midgut; however, not required for gametocyte development in host erythrocytes. Required for exflagellation of activated male gametocytes. Involved in gametocytes egress from host erythrocytes by promoting the relocalization of perforin-like protein PLP2-containing vesicles to the periphery of gametocytes; PLP2 secretion is required for permeabilization of the erythrocyte membrane and thus, promotes gametocyte egress. Dispensable for asexual blood stage development. This is Patatin-like phospholipase 1 from Plasmodium falciparum (isolate NF54).